A 426-amino-acid chain; its full sequence is UDP-N-acetylglucosamine 1-carboxyvinyltransferase 2 (426 aa).

22-23 (KN) serves as a coordination point for phosphoenolpyruvate. Arginine 92 lines the UDP-N-acetyl-alpha-D-glucosamine pocket. The Proton donor role is filled by aspartate 116. UDP-N-acetyl-alpha-D-glucosamine-binding positions include 121 to 125 (RPIDQ), aspartate 307, and isoleucine 329.

The protein belongs to the EPSP synthase family. MurA subfamily.

The protein resides in the cytoplasm. The catalysed reaction is phosphoenolpyruvate + UDP-N-acetyl-alpha-D-glucosamine = UDP-N-acetyl-3-O-(1-carboxyvinyl)-alpha-D-glucosamine + phosphate. It participates in cell wall biogenesis; peptidoglycan biosynthesis. Cell wall formation. Adds enolpyruvyl to UDP-N-acetylglucosamine. This Lactiplantibacillus plantarum (strain ATCC BAA-793 / NCIMB 8826 / WCFS1) (Lactobacillus plantarum) protein is UDP-N-acetylglucosamine 1-carboxyvinyltransferase 2.